An 888-amino-acid chain; its full sequence is Inactive deaminase YJL070C (888 aa).

Residues 1-42 (MQAVERRPSLLFDEYQNSVTKPNETKNKEARVLSENDGDVSP) are disordered. The residue at position 9 (serine 9) is a Phosphoserine. Over residues 23–34 (NETKNKEARVLS) the composition is skewed to basic and acidic residues. Residues serine 41, serine 178, and serine 180 each carry the phosphoserine modification.

This sequence belongs to the metallo-dependent hydrolases superfamily. Adenosine and AMP deaminases family.

This chain is Inactive deaminase YJL070C, found in Saccharomyces cerevisiae (strain ATCC 204508 / S288c) (Baker's yeast).